The primary structure comprises 428 residues: Sporulation kinase B (428 aa).

The Cytoplasmic segment spans residues Met-1–Asp-6. Residues Tyr-7–Gly-27 traverse the membrane as a helical segment. The Extracellular portion of the chain corresponds to Lys-28 to Asn-37. Residues Ser-38–His-58 traverse the membrane as a helical segment. Over Glu-59 to Gln-68 the chain is Cytoplasmic. Residues Met-69–Ala-89 traverse the membrane as a helical segment. The Extracellular segment spans residues Ser-90–Tyr-99. Residues Glu-100 to Phe-120 traverse the membrane as a helical segment. Residues Gln-121–Lys-132 are Cytoplasmic-facing. A helical membrane pass occupies residues Leu-133–Ile-153. Residues Leu-154 to Gly-166 lie on the Extracellular side of the membrane. Residues Ile-167–Ile-187 traverse the membrane as a helical segment. The Cytoplasmic portion of the chain corresponds to Tyr-188 to His-428. The region spanning Ser-218–Leu-426 is the Histidine kinase domain. His-221 bears the Phosphohistidine; by autocatalysis mark.

It localises to the cell membrane. It catalyses the reaction ATP + protein L-histidine = ADP + protein N-phospho-L-histidine.. Phosphorylates the sporulation-regulatory proteins spo0A and spo0F. Spo0F is required for the KinB activity. This Bacillus subtilis (strain 168) protein is Sporulation kinase B (kinB).